The chain runs to 891 residues: Alanine--tRNA ligase (891 aa).

Zn(2+) contacts are provided by histidine 564, histidine 568, cysteine 678, and histidine 682.

This sequence belongs to the class-II aminoacyl-tRNA synthetase family. Zn(2+) serves as cofactor.

Its subcellular location is the cytoplasm. The catalysed reaction is tRNA(Ala) + L-alanine + ATP = L-alanyl-tRNA(Ala) + AMP + diphosphate. Catalyzes the attachment of alanine to tRNA(Ala) in a two-step reaction: alanine is first activated by ATP to form Ala-AMP and then transferred to the acceptor end of tRNA(Ala). Also edits incorrectly charged Ser-tRNA(Ala) and Gly-tRNA(Ala) via its editing domain. The sequence is that of Alanine--tRNA ligase from Nitrobacter winogradskyi (strain ATCC 25391 / DSM 10237 / CIP 104748 / NCIMB 11846 / Nb-255).